A 504-amino-acid chain; its full sequence is Maturase K (504 aa).

Belongs to the intron maturase 2 family. MatK subfamily.

The protein resides in the plastid. It localises to the chloroplast. In terms of biological role, usually encoded in the trnK tRNA gene intron. Probably assists in splicing its own and other chloroplast group II introns. The protein is Maturase K of Hamamelis japonica (Japanese witch hazel).